We begin with the raw amino-acid sequence, 852 residues long: Kinesin-like protein KIF18B (852 aa).

Residues 7–351 (TLQVVVRVRP…LKYADRAKEI (345 aa)) form the Kinesin motor domain. 109-116 (GATGAGKT) serves as a coordination point for ATP. Residues 366 to 393 (ISQYATICQQLQAEVAALRKKLQVYEGG) adopt a coiled-coil conformation. Disordered stretches follow at residues 390-424 (YEGG…PAGP) and 437-485 (QVER…RLTL). Serine 404 bears the Phosphoserine mark. Position 417 is a phosphothreonine (threonine 417). Over residues 451 to 461 (QSPEDEDEGPA) the composition is skewed to acidic residues. A phosphoserine mark is found at serine 452, serine 480, and serine 558. Disordered stretches follow at residues 575-594 (IPVP…PVTR) and 602-689 (GPLH…SPRV). Residues 577-588 (VPSPLCPEPPGY) show a composition bias toward pro residues. The Nuclear localization signal motif lies at 624-632 (PMEKKRRRP). A phosphoserine mark is found at serine 633 and serine 639. Residues 653 to 656 (SFLP) carry the MAPRE1-binding motif. A Phosphoserine modification is found at serine 662. The span at 664 to 673 (PDTQPSQGPS) shows a compositional bias: polar residues. Threonine 674 is modified (phosphothreonine). A KIF2C-binding region spans residues 711-736 (TPLALPTRDLNATFDLSEEPPSKPSF). Residues 767–798 (MKGPKPTSSLPGTSACKKKRVASSSVSHGRSR) form a disordered region. 2 short sequence motifs (MAPRE1-binding) span residues 774–777 (SSLP) and 800–803 (ARLP). The residue at position 822 (serine 822) is a Phosphoserine.

Belongs to the TRAFAC class myosin-kinesin ATPase superfamily. Kinesin family. Interacts with MAPRE1; this interaction is required for efficient accumulation at microtubule plus ends. Interacts with KIF2C at microtubule tips; this interaction increases the affinity of both partners for microtubule plus ends and is required for robust microtubule depolymerization. KIF2C phosphorylation by AURKA or AURKB strongly reduces KIF18B-binding. As to expression, shows a prominent expression in the amygdala.

It is found in the nucleus. The protein localises to the cytoplasm. Its subcellular location is the cytoskeleton. Its function is as follows. In complex with KIF2C, constitutes the major microtubule plus-end depolymerizing activity in mitotic cells. Its major role may be to transport KIF2C and/or MAPRE1 along microtubules. This chain is Kinesin-like protein KIF18B (KIF18B), found in Homo sapiens (Human).